The chain runs to 232 residues: Large ribosomal subunit protein uL1 (232 aa).

The protein belongs to the universal ribosomal protein uL1 family. In terms of assembly, part of the 50S ribosomal subunit.

Binds directly to 23S rRNA. The L1 stalk is quite mobile in the ribosome, and is involved in E site tRNA release. Functionally, protein L1 is also a translational repressor protein, it controls the translation of the L11 operon by binding to its mRNA. The sequence is that of Large ribosomal subunit protein uL1 from Lysinibacillus sphaericus (strain C3-41).